Consider the following 156-residue polypeptide: Persephin (156 aa).

The N-terminal stretch at 1–21 (MAAGRLRILFLLLLSLHLGLG) is a signal peptide. Cystine bridges form between cysteine 66/cysteine 124, cysteine 93/cysteine 152, and cysteine 97/cysteine 154.

It belongs to the TGF-beta family. GDNF subfamily. Homodimer; disulfide-linked. Interacts with GFRA4 coreceptor and RET: forms a 2:2:2 ternary complex composed of PSPN ligand, GFRA4 and RET receptor. In terms of tissue distribution, expressed at low levels in substantia nigra. Cochlea.

It localises to the secreted. In terms of biological role, growth factor that exhibits neurotrophic activity on mesencephalic dopaminergic and motor neurons. Acts by binding to its coreceptor, GFRA4, leading to autophosphorylation and activation of the RET receptor. The polypeptide is Persephin (Rattus norvegicus (Rat)).